Reading from the N-terminus, the 317-residue chain is Eukaryotic translation initiation factor 2 subunit 2 (317 aa).

The segment at 1-146 is disordered; it reads MSATEEENVL…KEKTITTSDG (146 aa). Positions 79–90 are enriched in basic and acidic residues; the sequence is AIEKLENEGAHD. Over residues 109–125 the composition is skewed to low complexity; the sequence is KSSTTTTTSTTTTTTEP. The C4-type zinc finger occupies 222–246; the sequence is HVYNYVFAELGTNGSIDGNQRLVIR.

Belongs to the eIF-2-beta/eIF-5 family. Eukaryotic translation initiation factor 2 eIF2 is a heterotrimeric complex composed of an alpha, a beta and a gamma subunit.

It localises to the cytoplasm. Its subcellular location is the cytosol. Its function is as follows. Component of the eIF2 complex that functions in the early steps of protein synthesis by forming a ternary complex with GTP and initiator tRNA. This complex binds to a 40S ribosomal subunit, followed by mRNA binding to form a 43S pre-initiation complex (43S PIC). Junction of the 60S ribosomal subunit to form the 80S initiation complex is preceded by hydrolysis of the GTP bound to eIF2 and release of an eIF2-GDP binary complex. In order for eIF2 to recycle and catalyze another round of initiation, the GDP bound to eIF2 must exchange with GTP by way of a reaction catalyzed by eIF2B. This Dictyostelium discoideum (Social amoeba) protein is Eukaryotic translation initiation factor 2 subunit 2 (eif2s2).